We begin with the raw amino-acid sequence, 60 residues long: Large ribosomal subunit protein uL30 (60 aa).

Belongs to the universal ribosomal protein uL30 family. In terms of assembly, part of the 50S ribosomal subunit.

The protein is Large ribosomal subunit protein uL30 of Dechloromonas aromatica (strain RCB).